We begin with the raw amino-acid sequence, 323 residues long: V-type ATP synthase subunit C (323 aa).

Belongs to the V-ATPase V0D/AC39 subunit family.

Produces ATP from ADP in the presence of a proton gradient across the membrane. The protein is V-type ATP synthase subunit C (atpC) of Thermus thermophilus (strain ATCC 27634 / DSM 579 / HB8).